The primary structure comprises 514 residues: tRNA-2-methylthio-N(6)-dimethylallyladenosine synthase (514 aa).

The segment at 1–21 (MNEEQRKASSVDVLAERDKKA) is disordered. The MTTase N-terminal domain maps to 68–186 (RTFLIKTYGC…LPEILEEAYL (119 aa)). [4Fe-4S] cluster is bound by residues Cys-77, Cys-113, Cys-147, Cys-223, Cys-227, and Cys-230. Residues 209–440 (REGNIKAWVN…KKVGHYSQIA (232 aa)) form the Radical SAM core domain. In terms of domain architecture, TRAM spans 442–505 (SKYEGQTVTV…QYSLNGSFVK (64 aa)).

It belongs to the methylthiotransferase family. MiaB subfamily. Monomer. It depends on [4Fe-4S] cluster as a cofactor.

It localises to the cytoplasm. The enzyme catalyses N(6)-dimethylallyladenosine(37) in tRNA + (sulfur carrier)-SH + AH2 + 2 S-adenosyl-L-methionine = 2-methylsulfanyl-N(6)-dimethylallyladenosine(37) in tRNA + (sulfur carrier)-H + 5'-deoxyadenosine + L-methionine + A + S-adenosyl-L-homocysteine + 2 H(+). Catalyzes the methylthiolation of N6-(dimethylallyl)adenosine (i(6)A), leading to the formation of 2-methylthio-N6-(dimethylallyl)adenosine (ms(2)i(6)A) at position 37 in tRNAs that read codons beginning with uridine. This is tRNA-2-methylthio-N(6)-dimethylallyladenosine synthase from Staphylococcus aureus (strain N315).